The sequence spans 1002 residues: Chitin synthase II (1002 aa).

Disordered regions lie at residues 1 to 165 (MDRP…GRTS) and 178 to 209 (LDGSDDVFGPETDLSDSRPLPTHRDSFMSGSQ). Low complexity predominate over residues 63–78 (SYQPSVVSSHSRSASV). An N-linked (GlcNAc...) asparagine glycan is attached at Asn123. An N-linked (GlcNAc...) asparagine glycan is attached at Asn336. Helical transmembrane passes span 627–647 (WLNGAFFAAVYSLVQFRQILA), 669–689 (LLFTYFSLANFYLTFYFVAGG), 704–724 (SVIFTILRYTCVLLIATQFIL), 740–760 (SMIIYGVIMTYTSFACIYIVV), 780–800 (LIVSMASTIGLYFVMSFLYLE), 808–828 (SLQYFLLLPSYICTLQVYAFC), 906–926 (YMVVTWMIANGILAMAVSEIY), and 940–960 (ILWAVASLAIFRALGSTTFAI).

This sequence belongs to the chitin synthase family. Class II subfamily. Expressed in hyphal bodies.

It localises to the cell membrane. The enzyme catalyses [(1-&gt;4)-N-acetyl-beta-D-glucosaminyl](n) + UDP-N-acetyl-alpha-D-glucosamine = [(1-&gt;4)-N-acetyl-beta-D-glucosaminyl](n+1) + UDP + H(+). Polymerizes chitin, a structural polymer of the cell wall and septum, by transferring the sugar moiety of UDP-GlcNAc to the non-reducing end of the growing chitin polymer. Contributes to the production of conidia and the ability of fungal conidia to germinate. Involved in fungal stress tolerances. The chain is Chitin synthase II from Metarhizium acridum (strain CQMa 102).